Reading from the N-terminus, the 332-residue chain is Glyceraldehyde-3-phosphate dehydrogenase (332 aa).

NAD(+) contacts are provided by residues 10 to 11, Asp-32, and Met-77; that span reads RI. D-glyceraldehyde 3-phosphate is bound by residues 148–150, Thr-179, 208–209, and Arg-231; these read SCT and TG. The active-site Nucleophile is Cys-149. Asn-313 is an NAD(+) binding site.

The protein belongs to the glyceraldehyde-3-phosphate dehydrogenase family. Homotetramer.

It localises to the cytoplasm. The catalysed reaction is D-glyceraldehyde 3-phosphate + phosphate + NAD(+) = (2R)-3-phospho-glyceroyl phosphate + NADH + H(+). It functions in the pathway carbohydrate degradation; glycolysis; pyruvate from D-glyceraldehyde 3-phosphate: step 1/5. This is Glyceraldehyde-3-phosphate dehydrogenase (GPDA) from Phytophthora infestans (Potato late blight agent).